Reading from the N-terminus, the 364-residue chain is Putative transport protein BUsg_115 (364 aa).

9 helical membrane-spanning segments follow: residues 18–38, 40–60, 65–85, 161–181, 215–235, 243–263, 280–300, 309–329, and 331–351; these read IFIIAISATSFLIIQPFILGF, WASMIVIATWPLMLKMQKFLG, VAVIGMIIILLLLFIIPIVFL, GLFIMHLTLMLLFSLLLYWNG, ALGVVVTALIQAVLSGIGLLI, LLMILIVFSCLIQLGPLPILI, LLLIWSCFVFILDNILRPFFI, FLILLGVIGGLLAFGMIGLFI, and PVVLVILYRLIVSWIYGISIA.

Belongs to the autoinducer-2 exporter (AI-2E) (TC 2.A.86) family.

The protein resides in the cell membrane. This Buchnera aphidicola subsp. Schizaphis graminum (strain Sg) protein is Putative transport protein BUsg_115.